The following is a 617-amino-acid chain: pH-sensitive chloride channel 2 (617 aa).

Residues 1–28 (MHSPGAAAYVFLQCLVALVAAVIAQSGA) form the signal peptide. The Extracellular portion of the chain corresponds to 29–387 (DQPPTTVVEV…VHLAREMGFY (359 aa)). Residue asparagine 57 is glycosylated (N-linked (GlcNAc...) asparagine). Positions 82–96 (TVSVDSSSTTTVAST) are enriched in low complexity. Positions 82–110 (TVSVDSSSTTTVASTQEPTSTTERTMSPE) are disordered. Positions 97-106 (QEPTSTTERT) are enriched in polar residues. N-linked (GlcNAc...) asparagine glycosylation occurs at asparagine 130. Residues 131 to 147 (ATDDNRPDAKSSGKDSE) show a composition bias toward basic and acidic residues. The interval 131–155 (ATDDNRPDAKSSGKDSECPTLEGAD) is disordered. Residues asparagine 184, asparagine 234, asparagine 351, and asparagine 370 are each glycosylated (N-linked (GlcNAc...) asparagine). A helical membrane pass occupies residues 388 to 408 (MMDYFIPSIMLVAISWVTFWL). The Cytoplasmic segment spans residues 409–414 (QADQSA). A helical membrane pass occupies residues 415 to 434 (PRITLGTSTMLTFITLASAQ). The Extracellular portion of the chain corresponds to 435-447 (GKTLPKVSYIKAS). A helical membrane pass occupies residues 448–468 (EIWFLGCTGFIFGSLVEFAFV). The Cytoplasmic segment spans residues 469–596 (NTIWRRKRNV…VAIWIDKRSR (128 aa)). Residues 597–617 (FVFPIAFVIFNIFYWTFVYYV) form a helical membrane-spanning segment.

Belongs to the ligand-gated ion channel (TC 1.A.9) family.

Its subcellular location is the cell membrane. The catalysed reaction is chloride(in) = chloride(out). Functionally, ligand and pH-gated channel that mediates chloride transport in the mid-gut and thereby may function in larval metabolism and fluid homeostasis. Channel opening is triggered by zinc binding or, to a lesser extent, an increase in extracellular pH. The polypeptide is pH-sensitive chloride channel 2 (Anopheles gambiae (African malaria mosquito)).